The primary structure comprises 255 residues: uncharacterized protein (255 aa).

This sequence belongs to the methyltransferase superfamily.

This is an uncharacterized protein from Bacillus subtilis (strain 168).